A 247-amino-acid polypeptide reads, in one-letter code: Osmotin-like protein NP24-I (247 aa).

An N-terminal signal peptide occupies residues 1-21 (MGYLTSSFVLFFLLCVTYTYA). 8 disulfides stabilise this stretch: Cys-30–Cys-225, Cys-72–Cys-82, Cys-87–Cys-93, Cys-141–Cys-213, Cys-146–Cys-196, Cys-154–Cys-164, Cys-168–Cys-177, and Cys-178–Cys-183.

It belongs to the thaumatin family. In terms of tissue distribution, highest levels of both isoforms found in the outer pericarp, with smaller amounts in the inner pericarp.

The protein localises to the cytoplasm. It is found in the vacuole. It carries out the reaction Endohydrolysis of (1-&gt;3)- or (1-&gt;4)-linkages in beta-D-glucans when the glucose residue whose reducing group is involved in the linkage to be hydrolyzed is itself substituted at C-3.. Its function is as follows. Has antifungal activity against P.betae and F.dahliae. May be involved in disease resistance in tomatoes and/or have a possible role in fruit development and ripening. Binds to beta-glucans and exhibits beta-1,3-D-glucanase activity. The protein is Osmotin-like protein NP24-I of Solanum lycopersicum (Tomato).